Reading from the N-terminus, the 942-residue chain is Zinc finger protein 865 (942 aa).

Positions Phe-66–Pro-106 are disordered. A compositionally biased stretch (polar residues) spans Ala-96–Pro-106. 20 C2H2-type zinc fingers span residues Phe-172 to His-194, Tyr-200 to His-222, Phe-282 to His-304, Phe-310 to His-332, Val-338 to His-360, Tyr-367 to His-389, Phe-466 to His-488, His-494 to His-516, Tyr-522 to His-544, Phe-564 to His-586, Tyr-592 to His-614, Phe-678 to His-700, Leu-706 to His-728, Phe-734 to His-756, Tyr-762 to His-784, Tyr-790 to His-812, Gln-818 to His-840, Tyr-846 to His-868, Leu-874 to His-896, and Phe-902 to His-924.

It belongs to the krueppel C2H2-type zinc-finger protein family.

It localises to the nucleus. Its function is as follows. May be involved in transcriptional regulation. The sequence is that of Zinc finger protein 865 (znf865) from Xenopus tropicalis (Western clawed frog).